Consider the following 416-residue polypeptide: Cysteate synthase (416 aa).

Lys-104 carries the post-translational modification N6-(pyridoxal phosphate)lysine. Asn-130 contacts pyridoxal 5'-phosphate.

Belongs to the threonine synthase family. Cysteate synthase subfamily. As to quaternary structure, homotrimer. Pyridoxal 5'-phosphate is required as a cofactor.

It carries out the reaction O-phospho-L-serine + sulfite + H(+) = L-cysteate + phosphate. The protein operates within cofactor biosynthesis; coenzyme M biosynthesis. Is inhibited by AP3 (DL-2-amino-3-phosphonopropionate) and, to a lesser extent, by L-aspartate or AP4 (DL-2-amino-4-phosphonobutyrate). Is also inhibited by EDTA in vitro. Functionally, specifically catalyzes the beta-elimination of phosphate from L-phosphoserine and the beta-addition of sulfite to the dehydroalanine intermediate to produce L-cysteate. Does not display threonine synthase activity like the paralog protein ThrC. This Methanosarcina acetivorans (strain ATCC 35395 / DSM 2834 / JCM 12185 / C2A) protein is Cysteate synthase.